The primary structure comprises 209 residues: Thymidylate kinase (209 aa).

7–14 (GIDGAGKS) is an ATP binding site.

This sequence belongs to the thymidylate kinase family.

It catalyses the reaction dTMP + ATP = dTDP + ADP. Functionally, phosphorylation of dTMP to form dTDP in both de novo and salvage pathways of dTTP synthesis. The sequence is that of Thymidylate kinase from Mycoplasma mobile (strain ATCC 43663 / 163K / NCTC 11711) (Mesomycoplasma mobile).